Consider the following 372-residue polypeptide: Y-box-binding protein 3 (372 aa).

The tract at residues 1-82 is disordered; that stretch reads MSEAGEATTT…LATAAGSEDA (82 aa). Ser-2 is modified (N-acetylserine). Ser-2 is subject to Phosphoserine. Low complexity predominate over residues 7-28; sequence ATTTTTTTLPQAPTEAAAAAPQ. Ser-34 carries the post-translational modification Phosphoserine. A compositionally biased stretch (low complexity) spans 35-79; that stretch reads PVGSGAPQAAAPAPAAHVAGNPGGDAAPAATGTAAAASLATAAGS. The CSD domain maps to 93–157; it reads GTVKWFNVRN…GEKGAEAANV (65 aa). A phosphoserine mark is found at Ser-134, Ser-201, Ser-203, and Ser-204. The interval 181 to 372 is disordered; sequence YYGRRRGPPR…APPTQQSSAE (192 aa). The span at 222–238 shows a compositional bias: basic residues; that stretch reads QLRRPQYRPQYRQRRFP. Arg-251 is modified (omega-N-methylarginine). Residues 314 to 324 are compositionally biased toward polar residues; sequence QQATSGPNQPS. Ser-324 is modified (phosphoserine). An Omega-N-methylarginine modification is found at Arg-326. Positions 327–340 are enriched in basic residues; it reads RGYRRPYNYRRRPR. Ser-346, Ser-369, and Ser-370 each carry phosphoserine.

As to quaternary structure, found in a mRNP complex with YBX2. Interacts with RRP1B. Highly expressed in skeletal muscle and heart.

Its subcellular location is the cytoplasm. It is found in the nucleus. Its function is as follows. Binds to the GM-CSF promoter. Seems to act as a repressor. Also binds to full-length mRNA and to short RNA sequences containing the consensus site 5'-UCCAUCA-3'. May have a role in translation repression. The chain is Y-box-binding protein 3 (YBX3) from Homo sapiens (Human).